The sequence spans 94 residues: Translation initiation factor IF-1 (94 aa).

Positions Met-1 to Lys-72 constitute an S1-like domain. Positions His-71 to Arg-94 are disordered. Residues Pro-82–Arg-94 show a composition bias toward low complexity.

This sequence belongs to the IF-1 family. As to quaternary structure, component of the 30S ribosomal translation pre-initiation complex which assembles on the 30S ribosome in the order IF-2 and IF-3, IF-1 and N-formylmethionyl-tRNA(fMet); mRNA recruitment can occur at any time during PIC assembly.

It localises to the cytoplasm. Functionally, one of the essential components for the initiation of protein synthesis. Stabilizes the binding of IF-2 and IF-3 on the 30S subunit to which N-formylmethionyl-tRNA(fMet) subsequently binds. Helps modulate mRNA selection, yielding the 30S pre-initiation complex (PIC). Upon addition of the 50S ribosomal subunit IF-1, IF-2 and IF-3 are released leaving the mature 70S translation initiation complex. The sequence is that of Translation initiation factor IF-1 from Rhodopseudomonas palustris (strain BisB5).